The primary structure comprises 373 residues: Phosphoserine aminotransferase (373 aa).

Residue Arg41 coordinates L-glutamate. Pyridoxal 5'-phosphate is bound by residues 75–76, Trp101, Thr152, Asp172, and Gln195; that span reads GT. Position 196 is an N6-(pyridoxal phosphate)lysine (Lys196). 236 to 237 lines the pyridoxal 5'-phosphate pocket; the sequence is NT.

It belongs to the class-V pyridoxal-phosphate-dependent aminotransferase family. SerC subfamily. Homodimer. Pyridoxal 5'-phosphate serves as cofactor.

The protein resides in the cytoplasm. It carries out the reaction O-phospho-L-serine + 2-oxoglutarate = 3-phosphooxypyruvate + L-glutamate. The catalysed reaction is 4-(phosphooxy)-L-threonine + 2-oxoglutarate = (R)-3-hydroxy-2-oxo-4-phosphooxybutanoate + L-glutamate. It participates in amino-acid biosynthesis; L-serine biosynthesis; L-serine from 3-phospho-D-glycerate: step 2/3. In terms of biological role, catalyzes the reversible conversion of 3-phosphohydroxypyruvate to phosphoserine and of 3-hydroxy-2-oxo-4-phosphonooxybutanoate to phosphohydroxythreonine. This Lactobacillus helveticus (strain DPC 4571) protein is Phosphoserine aminotransferase.